Consider the following 771-residue polypeptide: Ribonucleoside-diphosphate reductase large subunit (771 aa).

The region spanning 1-92 (MFVIKRNGYK…VSNLHKETKK (92 aa)) is the ATP-cone domain. ATP-binding positions include 5 to 6 (KR), 11 to 17 (ENVMFDK), threonine 53, aspartate 57, and lysine 88. The GDP site is built by serine 202 and serine 217. Residues 226-228 (DSI), lysine 243, and arginine 256 contribute to the dTTP site. GDP is bound at residue asparagine 427. Asparagine 427 acts as the Proton acceptor in catalysis. Cysteine 429 serves as the catalytic Cysteine radical intermediate. Residues glutamate 431 and 603-606 (TAST) contribute to the GDP site. Residue glutamate 431 is the Proton acceptor of the active site.

The protein belongs to the ribonucleoside diphosphate reductase large chain family. In terms of assembly, interacts with RNR2/OPG047 subunit. Mg(2+) is required as a cofactor.

It carries out the reaction a 2'-deoxyribonucleoside 5'-diphosphate + [thioredoxin]-disulfide + H2O = a ribonucleoside 5'-diphosphate + [thioredoxin]-dithiol. Its function is as follows. Ribonucleoside-diphosphate reductase holoenzyme provides the precursors necessary for viral DNA synthesis. Allows virus growth in non-dividing cells. Catalyzes the biosynthesis of deoxyribonucleotides from the corresponding ribonucleotides. This Homo sapiens (Human) protein is Ribonucleoside-diphosphate reductase large subunit (OPG080).